A 477-amino-acid chain; its full sequence is MNRRPVPFEIGPVHFVGIGGIGMSGIAEIMLRTGYQVQGSDAKPSANTERLEKLGARIFIGHDAKNVEGAYAIVYSTAVKPDNPEMVEGRARRLPLVRRAEMLAELMRLQFSIAVGGTHGKTTTTSMVAAILDAGGLDPTVVNGGIINAYGTNAKVGAGDWIVVEADESDGTFLKLKSTVAVVTNIDPEHLDHYGDFEAVKKAFQDFVENIPFYGFAAVCLDHPEVQAMTARVENRRLVTYGVNPQAEVRAHNIRMGPEGARFSVVIQPRDGGFISFDDLLLPMAGQHNVQNALAAIAVARELGVSPDAIRKGLAAFGGVKRRFTTTGVAGGVRVVDDYGHHPVEIASVLKAARAVSEGKVIAVVQPHRYTRLRDLFEDFCACFNDADTVIVADVYAAGEAPIEGVGKESLVEGLRRYGHRRVLPLPAPAGLAALVREEAHPGDLVVLLGAGDITSWAYALPGELEALSASGGAAAE.

117–123 (GTHGKTT) provides a ligand contact to ATP.

Belongs to the MurCDEF family.

It localises to the cytoplasm. It carries out the reaction UDP-N-acetyl-alpha-D-muramate + L-alanine + ATP = UDP-N-acetyl-alpha-D-muramoyl-L-alanine + ADP + phosphate + H(+). The protein operates within cell wall biogenesis; peptidoglycan biosynthesis. Cell wall formation. This Phenylobacterium zucineum (strain HLK1) protein is UDP-N-acetylmuramate--L-alanine ligase.